Reading from the N-terminus, the 158-residue chain is Nucleoside diphosphate kinase (158 aa).

ATP is bound by residues Lys-16, Phe-64, Arg-92, Thr-98, Arg-109, and Asn-119. The Pros-phosphohistidine intermediate role is filled by His-122.

Belongs to the NDK family. The cofactor is Mg(2+).

The protein resides in the cytoplasm. The enzyme catalyses a 2'-deoxyribonucleoside 5'-diphosphate + ATP = a 2'-deoxyribonucleoside 5'-triphosphate + ADP. The catalysed reaction is a ribonucleoside 5'-diphosphate + ATP = a ribonucleoside 5'-triphosphate + ADP. In terms of biological role, major role in the synthesis of nucleoside triphosphates other than ATP. The ATP gamma phosphate is transferred to the NDP beta phosphate via a ping-pong mechanism, using a phosphorylated active-site intermediate. The polypeptide is Nucleoside diphosphate kinase (Haloquadratum walsbyi (strain DSM 16790 / HBSQ001)).